Consider the following 497-residue polypeptide: MFNKIIKLGQKKFNKSDQHHQDNNNNNNNTSTNTVVRGSRTTTPAPSSVSNGESQTTAQSPSQTPNHPMFTTTPILEVLPLLKDVSSSDRPLLFMKKAHMCSCHCDFSDTLIMPREKEIKRQTLLELVDFLHSSSGKVNETMQSELIRMVSANIFRCLPPAYHENTGAPPEGNDPEEEEPYLEPWWPHLQLVYELLLRYVVSSEIEPKTAKKFINHTFVSRLLDLFDSEDPREREYLKTVLHRIYGKFIFHRPFIRCSIYNIFYKFLYETERCIGIGELLEILGSVINGFTVPMREEHRLYLVKAILPLHKSKGISIYHQQLAYCVTQFVEKDYKLADTVIRGLLKFWPLTNCQKEVLFLGELEEVLDATEPSEFQQCVVPLFTQIGKCLNSAHFQVAERALFLWNNEHIVGLIAQNKDVIFPIIFEALERNMKGHWNQAVHGLSENVRRMFLEMDTELFEECEKQYLENEAKACELLEQRELTWKRLEEAASLAAN.

The interval 12–71 is disordered; that stretch reads KFNKSDQHHQDNNNNNNNTSTNTVVRGSRTTTPAPSSVSNGESQTTAQSPSQTPNHPMFT. Over residues 23–34 the composition is skewed to low complexity; that stretch reads NNNNNNNTSTNT. The span at 35 to 71 shows a compositional bias: polar residues; it reads VVRGSRTTTPAPSSVSNGESQTTAQSPSQTPNHPMFT.

The protein belongs to the phosphatase 2A regulatory subunit B56 family. PP2A consists of a common heteromeric enzyme, composed of a catalytic subunit (subunits C), a constant regulatory subunit (subunit A), and a variety of regulatory subunits such as subunits B (the R2/B/PR55/B55, R3/B''/PR72/PR130/PR59 and R5/B'/B56 families). Expressed ubiquitously.

Its subcellular location is the cytoplasm. Its function is as follows. The B regulatory subunit may modulate substrate selectivity and catalytic activity, and may also direct the localization of the catalytic enzyme to a particular subcellular compartment. The protein is Serine/threonine protein phosphatase 2A 57 kDa regulatory subunit B' epsilon isoform (B'EPSILON) of Arabidopsis thaliana (Mouse-ear cress).